We begin with the raw amino-acid sequence, 251 residues long: Large ribosomal subunit protein uL16m (251 aa).

The N-terminal 29 residues, 1–29, are a transit peptide targeting the mitochondrion; it reads MWRLLTRVPAPLLRMHFSDSWAALPTSAG.

Belongs to the universal ribosomal protein uL16 family. As to quaternary structure, component of the mitochondrial ribosome large subunit (39S) which comprises a 16S rRNA and about 50 distinct proteins.

It is found in the mitochondrion. This Mus musculus (Mouse) protein is Large ribosomal subunit protein uL16m (Mrpl16).